A 327-amino-acid chain; its full sequence is Nuclear apoptosis-inducing factor 1 (327 aa).

The tract at residues 1 to 70 (MAVPAKKRKM…CRRELPEVKK (70 aa)) is required for nuclear localization and apoptosis-inducing activity. Over residues 88 to 98 (AAVEGGEAPGP) the composition is skewed to low complexity. 2 disordered regions span residues 88-118 (AAVEGGEAPGPTEEDGAGGPGTGGGSGAGGP) and 303-327 (NMPNPATASEPGQVAQNGQPDSIIQ). The segment covering 104–117 (AGGPGTGGGSGAGG) has biased composition (gly residues). Polar residues predominate over residues 316 to 327 (VAQNGQPDSIIQ).

The protein belongs to the NAIF1 family. As to quaternary structure, interacts with HARBI1.

The protein localises to the nucleus. Induces apoptosis. The chain is Nuclear apoptosis-inducing factor 1 (NAIF1) from Bos taurus (Bovine).